We begin with the raw amino-acid sequence, 142 residues long: Cystatin-8 (142 aa).

The N-terminal stretch at 1 to 21 (MPRCRWLSLILLTIPLALVAR) is a signal peptide. N-linked (GlcNAc...) asparagine glycans are attached at residues Asn27 and Asn39. The short motif at 77-81 (QVTNL) is the Secondary area of contact element. Intrachain disulfides connect Cys95–Cys105 and Cys119–Cys139.

The protein belongs to the cystatin family. Proximal caput region of the epididymis. Lower expression in the testis. Within the testis it is localized to the elongating spermatids, whereas within the epididymis it is exclusively synthesized by the proximal caput epithelium.

It is found in the secreted. Functionally, performs a specialized role during sperm development and maturation. This chain is Cystatin-8 (CST8), found in Homo sapiens (Human).